We begin with the raw amino-acid sequence, 502 residues long: Putative ZDHHC-type palmitoyltransferase 3 (502 aa).

A disordered region spans residues 1-80 (MVNNNNKNNK…ESTNENNKKL (80 aa)). Residues 10 to 30 (KINDRENEENEKNKKKDKIYE) show a composition bias toward basic and acidic residues. A compositionally biased stretch (low complexity) spans 31-52 (NKIGINENNNENNNYQNENFIY). Asn-58 is a glycosylation site (N-linked (GlcNAc...) asparagine). The segment covering 59–73 (DTQEGDISEIQEEST) has biased composition (acidic residues). 2 helical membrane-spanning segments follow: residues 104–124 (FFIVTQIFILVPSLFFEIKLV) and 134–154 (LEISNYIITLTLLVFIFYNLY). Residues 200–281 (IANDDPISSS…NNNNNNNKNQ (82 aa)) are disordered. Residues 203–212 (DDPISSSSDF) show a composition bias toward low complexity. Residues 213–222 (SDSDDDDQDE) are compositionally biased toward acidic residues. Residues 248-280 (NSNNNNSNNNNNNNKNRNRNNNNNNNNNNNNKN) show a composition bias toward low complexity. Residues Asn-252 and Asn-280 are each glycosylated (N-linked (GlcNAc...) asparagine). In terms of domain architecture, DHHC spans 299–349 (KFCITCGLYREPRSFHCSTCNNCVENFDHHCVWIGNCIGRRNYREFFYFIT). The active-site S-palmitoyl cysteine intermediate is Cys-329. The helical transmembrane segment at 344–364 (FFYFITTTLIYALYLLSMSIV) threads the bilayer. N-linked (GlcNAc...) asparagine glycosylation is found at Asn-371, Asn-388, and Asn-393. Residues 419-439 (GLCIFIIIFGFIMSLLLGFLV) form a helical membrane-spanning segment. N-linked (GlcNAc...) asparagine glycans are attached at residues Asn-449, Asn-483, and Asn-494.

It belongs to the DHHC palmitoyltransferase family.

It is found in the membrane. The catalysed reaction is L-cysteinyl-[protein] + hexadecanoyl-CoA = S-hexadecanoyl-L-cysteinyl-[protein] + CoA. The chain is Putative ZDHHC-type palmitoyltransferase 3 from Dictyostelium discoideum (Social amoeba).